Consider the following 368-residue polypeptide: Phosphate acyltransferase (368 aa).

Residues 337-368 (LEQAARDASGAGQASPIAGQPAEPYAAQSSKA) are disordered.

This sequence belongs to the PlsX family. Homodimer. Probably interacts with PlsY.

Its subcellular location is the cytoplasm. The catalysed reaction is a fatty acyl-[ACP] + phosphate = an acyl phosphate + holo-[ACP]. The protein operates within lipid metabolism; phospholipid metabolism. Catalyzes the reversible formation of acyl-phosphate (acyl-PO(4)) from acyl-[acyl-carrier-protein] (acyl-ACP). This enzyme utilizes acyl-ACP as fatty acyl donor, but not acyl-CoA. The protein is Phosphate acyltransferase of Paraburkholderia phytofirmans (strain DSM 17436 / LMG 22146 / PsJN) (Burkholderia phytofirmans).